A 132-amino-acid chain; its full sequence is Small ribosomal subunit protein uS8 (132 aa).

The protein belongs to the universal ribosomal protein uS8 family. As to quaternary structure, part of the 30S ribosomal subunit. Contacts proteins S5 and S12.

In terms of biological role, one of the primary rRNA binding proteins, it binds directly to 16S rRNA central domain where it helps coordinate assembly of the platform of the 30S subunit. This chain is Small ribosomal subunit protein uS8, found in Bacillus pumilus (strain SAFR-032).